Reading from the N-terminus, the 693-residue chain is MVNQVATDRFIQDLERVAQVRSEMSVCLNKLAETINKAELAGDSSSGKLSLERDIEDITIASKNLQQGVFRLLVLGDMKRGKSTFLNALIGENLLPSDVNPCTAVLTVLRYGPEKKVTIHFNDGKSPQQLDFQNFKYKYTIDPAEAKKLEQEKKQAFPDVDYAVVEYPLTLLQKGIEIVDSPGLNDTEARNELSLGYVNNCHAILFVMRASQPCTLGERRYLENYIKGRGLTVFFLVNAWDQVRESLIDPDDVEELQASENRLRQVFNANLAEYCTVEGQNIYDERVFELSSIQALRRRLKNPQADLDGTGFPKFMDSLNTFLTRERAIAELRQVRTLARLACNHTREAVARRIPLLEQDVNELKKRIDSVEPEFNKLTGIRDEFQKEIINTRDTQARTISESFRSYVLNLGNTFENDFLRYQPELNLFDFLSSGKREAFNAALQKAFEQYITDKSAAWTLTAEKDINAAFKELSRSASQYGASYNQITDQITEKLTGKDVKVHTTTTAEEDNSPGWAKWAMGLLSLSKGNLAGFALAGAGFDWKNILLNYFTVIGIGGIITAVTGILLGPIGFALLGLGVGFLQADQARRELVKTAKKELVKHLPQVAHEQSQVVYNAVKECFDSYEREVSKRINDDIVSRKSELDNLVKQKQTREINRESEFNRLKNLQEDVIAQLQKIEAAYSNLLAYYS.

Residues 1-521 (MVNQVATDRF…DNSPGWAKWA (521 aa)) lie on the Cytoplasmic side of the membrane. One can recognise a Dynamin-type G domain in the interval 66-313 (QQGVFRLLVL…QADLDGTGFP (248 aa)). The interval 76-83 (GDMKRGKS) is G1 motif. 79–84 (KRGKST) is a binding site for GTP. A G2 motif region spans residues 102 to 103 (CT). The interval 180-183 (DSPG) is G3 motif. Residue 235-241 (FLVNAWD) participates in GTP binding. The G4 motif stretch occupies residues 238–241 (NAWD). Position 268 (asparagine 268) is a region of interest, G5 motif. GTP is bound at residue 292-293 (SI). Positions 311–571 (GFPKFMDSLN…TAVTGILLGP (261 aa)) are middle domain. A coiled-coil region spans residues 347–378 (REAVARRIPLLEQDVNELKKRIDSVEPEFNKL). Residues 522–574 (MGLLSLSKGNLAGFALAGAGFDWKNILLNYFTVIGIGGIITAVTGILLGPIGF) lie within the membrane without spanning it. A paddle domain region spans residues 572 to 606 (IGFALLGLGVGFLQADQARRELVKTAKKELVKHLP). Topologically, residues 575 to 693 (ALLGLGVGFL…AYSNLLAYYS (119 aa)) are cytoplasmic. Residues 607–693 (QVAHEQSQVV…AYSNLLAYYS (87 aa)) are GED. Residues 661 to 688 (ESEFNRLKNLQEDVIAQLQKIEAAYSNL) are a coiled coil.

This sequence belongs to the TRAFAC class dynamin-like GTPase superfamily. Dynamin/Fzo/YdjA family. Mitofusin subfamily. Homodimer. Self-assembles in the presence of GMP-PNP and liposomes, and probably also in the presence of GTP.

It is found in the cell inner membrane. The enzyme catalyses GTP + H2O = GDP + phosphate + H(+). Its function is as follows. Dynamin-related GTPase probably involved in membrane remodeling. Lipid and nucleotide-binding are thought to induce a large intramolecular rearrangement, leading to assembly on lipid bilayers and possible membrane curving. In the presence of the non-hydrolyzable GTP analog GMP-PNP self-assembles on a lipid bilayer; this does not stimulate subsequent GTPase activity. Does not bind lipids in the presence of GDP; perhaps GTP hydrolysis disrupts membrane-binding. This chain is Bacterial dynamin-like protein, found in Nostoc punctiforme (strain ATCC 29133 / PCC 73102).